Here is a 449-residue protein sequence, read N- to C-terminus: Tapasin (449 aa).

Residues 1-20 (MKPLSLLLAVASALGTAVSA) form the signal peptide. Over 21 to 413 (GPAVIECWMV…GLSGPSLEDS (393 aa)) the chain is Lumenal. A disulfide bond links Cys27 and Cys91. N-linked (GlcNAc...) asparagine glycosylation is present at Asn253. The 108-residue stretch at 292–399 (PKISLTPAPL…PTLGRSAEVT (108 aa)) folds into the Ig-like C1-type domain. Cys315 and Cys382 are joined by a disulfide. The helical transmembrane segment at 414–434 (VGLFLSAFLLLGLIKALGWVA) threads the bilayer. Residues 435-449 (ASRSTSKDPKEKKAQ) lie on the Cytoplasmic side of the membrane.

As to quaternary structure, heterodimer with PDIA3; disulfide-linked. Obligatory mediator for the interaction between newly assembled MHC class I molecules, calreticulin, PDIA3 and TAP. Up to 4 MHC class I/tapasin complexes bind to 1 TAP. Interacts with HLA-G-B2M complex; this interaction is required for loading of high affinity peptides. On its own or as part of MHC class I peptide loading complex, interacts with ligand-free MR1 or MR1-B2M complex, providing for stable MR1 pools ready for metabolite antigen processing.

The protein resides in the endoplasmic reticulum membrane. Involved in the association of MHC class I with transporter associated with antigen processing (TAP) and in the assembly of MHC class I with peptide (peptide loading). This is Tapasin (TAPBP) from Canis lupus familiaris (Dog).